The sequence spans 333 residues: Ornithine carbamoyltransferase (333 aa).

Carbamoyl phosphate-binding positions include 56–59, arginine 107, and 134–137; these read STRT and HPTQ. Residues asparagine 167, aspartate 231, and 235–236 contribute to the L-ornithine site; that span reads SM. Residues 273–274 and arginine 318 contribute to the carbamoyl phosphate site; that span reads CL.

It belongs to the aspartate/ornithine carbamoyltransferase superfamily. OTCase family.

The protein localises to the cytoplasm. The catalysed reaction is carbamoyl phosphate + L-ornithine = L-citrulline + phosphate + H(+). The protein operates within amino-acid degradation; L-arginine degradation via ADI pathway; carbamoyl phosphate from L-arginine: step 2/2. Reversibly catalyzes the transfer of the carbamoyl group from carbamoyl phosphate (CP) to the N(epsilon) atom of ornithine (ORN) to produce L-citrulline. This Clostridium botulinum (strain ATCC 19397 / Type A) protein is Ornithine carbamoyltransferase.